A 706-amino-acid polypeptide reads, in one-letter code: DNA ligase (706 aa).

Residues 48 to 52, 97 to 98, and E131 each bind NAD(+); these read DAAYD and SL. The N6-AMP-lysine intermediate role is filled by K133. R154, E191, K307, and K331 together coordinate NAD(+). Residues C425, C428, C443, and C449 each coordinate Zn(2+). A BRCT domain is found at 628 to 706; sequence RADSAVAGKT…EDEWLKLIEG (79 aa).

Belongs to the NAD-dependent DNA ligase family. LigA subfamily. Mg(2+) serves as cofactor. Mn(2+) is required as a cofactor.

It catalyses the reaction NAD(+) + (deoxyribonucleotide)n-3'-hydroxyl + 5'-phospho-(deoxyribonucleotide)m = (deoxyribonucleotide)n+m + AMP + beta-nicotinamide D-nucleotide.. In terms of biological role, DNA ligase that catalyzes the formation of phosphodiester linkages between 5'-phosphoryl and 3'-hydroxyl groups in double-stranded DNA using NAD as a coenzyme and as the energy source for the reaction. It is essential for DNA replication and repair of damaged DNA. In Afipia carboxidovorans (strain ATCC 49405 / DSM 1227 / KCTC 32145 / OM5) (Oligotropha carboxidovorans), this protein is DNA ligase.